Here is a 564-residue protein sequence, read N- to C-terminus: Proline--tRNA ligase (564 aa).

Belongs to the class-II aminoacyl-tRNA synthetase family. ProS type 1 subfamily. In terms of assembly, homodimer.

The protein localises to the cytoplasm. The catalysed reaction is tRNA(Pro) + L-proline + ATP = L-prolyl-tRNA(Pro) + AMP + diphosphate. Catalyzes the attachment of proline to tRNA(Pro) in a two-step reaction: proline is first activated by ATP to form Pro-AMP and then transferred to the acceptor end of tRNA(Pro). As ProRS can inadvertently accommodate and process non-cognate amino acids such as alanine and cysteine, to avoid such errors it has two additional distinct editing activities against alanine. One activity is designated as 'pretransfer' editing and involves the tRNA(Pro)-independent hydrolysis of activated Ala-AMP. The other activity is designated 'posttransfer' editing and involves deacylation of mischarged Ala-tRNA(Pro). The misacylated Cys-tRNA(Pro) is not edited by ProRS. The polypeptide is Proline--tRNA ligase (Coxiella burnetii (strain RSA 331 / Henzerling II)).